A 473-amino-acid polypeptide reads, in one-letter code: Photosystem II CP43 reaction center protein (473 aa).

Residues 1 to 14 (MKTLYSLRRFYPVE) constitute a propeptide that is removed on maturation. N-acetylthreonine is present on Thr15. At Thr15 the chain carries Phosphothreonine. 5 helical membrane-spanning segments follow: residues 69 to 93 (LFEV…PHLA), 134 to 155 (LLGP…KDRN), 178 to 200 (KALY…RKIT), 255 to 275 (KPFA…LSYS), and 291 to 312 (WFNN…ASQA). Glu367 serves as a coordination point for [CaMn4O5] cluster. A helical transmembrane segment spans residues 447 to 471 (RARAAAAGFEKGIDRDFEPVLSMTP).

This sequence belongs to the PsbB/PsbC family. PsbC subfamily. In terms of assembly, PSII is composed of 1 copy each of membrane proteins PsbA, PsbB, PsbC, PsbD, PsbE, PsbF, PsbH, PsbI, PsbJ, PsbK, PsbL, PsbM, PsbT, PsbX, PsbY, PsbZ, Psb30/Ycf12, at least 3 peripheral proteins of the oxygen-evolving complex and a large number of cofactors. It forms dimeric complexes. Binds multiple chlorophylls and provides some of the ligands for the Ca-4Mn-5O cluster of the oxygen-evolving complex. It may also provide a ligand for a Cl- that is required for oxygen evolution. PSII binds additional chlorophylls, carotenoids and specific lipids. serves as cofactor.

It localises to the plastid. The protein localises to the chloroplast thylakoid membrane. Its function is as follows. One of the components of the core complex of photosystem II (PSII). It binds chlorophyll and helps catalyze the primary light-induced photochemical processes of PSII. PSII is a light-driven water:plastoquinone oxidoreductase, using light energy to abstract electrons from H(2)O, generating O(2) and a proton gradient subsequently used for ATP formation. The protein is Photosystem II CP43 reaction center protein of Eucalyptus globulus subsp. globulus (Tasmanian blue gum).